The sequence spans 104 residues: Pterin-4-alpha-carbinolamine dehydratase (104 aa).

Ala-2 bears the N-acetylalanine mark. Residues Asp-61–His-63 and Ser-78–Glu-81 contribute to the substrate site.

This sequence belongs to the pterin-4-alpha-carbinolamine dehydratase family. As to quaternary structure, homotetramer and homodimer. Heterotetramer with HNF1A; formed by a dimer of dimers. Interacts with HNF1B (via HNF-p1 domain); the interaction increases HNF1B transactivation activity. Mainly expressed in the liver, in pancreatic cells, and in the kidney, especially in the distal convoluted tubule, in the cortical thick ascending limb of Henle's loop and in the connecting tubule.

It localises to the cytoplasm. The protein localises to the nucleus. It carries out the reaction (4aS,6R)-4a-hydroxy-L-erythro-5,6,7,8-tetrahydrobiopterin = (6R)-L-erythro-6,7-dihydrobiopterin + H2O. Involved in tetrahydrobiopterin biosynthesis. Seems to both prevent the formation of 7-pterins and accelerate the formation of quinonoid-BH2. Coactivator for HNF1A-dependent transcription. Regulates the dimerization of homeodomain protein HNF1A and enhances its transcriptional activity. Also acts as a coactivator for HNF1B-dependent transcription. This Mus musculus (Mouse) protein is Pterin-4-alpha-carbinolamine dehydratase (Pcbd1).